A 340-amino-acid chain; its full sequence is Adenosine kinase (340 aa).

Asp-293 is an active-site residue.

This sequence belongs to the carbohydrate kinase PfkB family. Monomer. The cofactor is Mg(2+).

The catalysed reaction is adenosine + ATP = AMP + ADP + H(+). The protein operates within purine metabolism; AMP biosynthesis via salvage pathway; AMP from adenosine: step 1/1. Functionally, ATP dependent phosphorylation of adenosine and other related nucleoside analogs to monophosphate derivatives. This is Adenosine kinase (adk) from Dictyostelium discoideum (Social amoeba).